A 341-amino-acid polypeptide reads, in one-letter code: tRNA N6-adenosine threonylcarbamoyltransferase (341 aa).

Fe cation is bound by residues histidine 111 and histidine 115. Residues 134-138 (LVSGG), aspartate 167, glycine 180, and asparagine 277 contribute to the substrate site. Fe cation is bound at residue aspartate 305.

Belongs to the KAE1 / TsaD family. Fe(2+) serves as cofactor.

The protein localises to the cytoplasm. It carries out the reaction L-threonylcarbamoyladenylate + adenosine(37) in tRNA = N(6)-L-threonylcarbamoyladenosine(37) in tRNA + AMP + H(+). Required for the formation of a threonylcarbamoyl group on adenosine at position 37 (t(6)A37) in tRNAs that read codons beginning with adenine. Is involved in the transfer of the threonylcarbamoyl moiety of threonylcarbamoyl-AMP (TC-AMP) to the N6 group of A37, together with TsaE and TsaB. TsaD likely plays a direct catalytic role in this reaction. The chain is tRNA N6-adenosine threonylcarbamoyltransferase from Chromobacterium violaceum (strain ATCC 12472 / DSM 30191 / JCM 1249 / CCUG 213 / NBRC 12614 / NCIMB 9131 / NCTC 9757 / MK).